The primary structure comprises 237 residues: Derlin-2 (237 aa).

The Cytoplasmic segment spans residues 1 to 20 (MNGVVAALEEMPPVTRFYTG). A helical transmembrane segment spans residues 21-41 (ACVLLTTAVHLEFVTPFHLYF). The Lumenal segment spans residues 42–54 (NWELIIRKYQFWR). Residues 55-75 (LITSFCFFGSFGFSFLFNMIF) form a helical membrane-spanning segment. Topologically, residues 76–97 (TYRYCMMLEEGSFRGRRADFVY) are cytoplasmic. Residues 98 to 118 (MFLFGAVLMILSGIFVQILFL) form a helical membrane-spanning segment. At 119–166 (GQAFTIMLVYIWSRRNPMIQMNFFGVLTFTAPYLPWVLLLFSLLLGNN) the chain is on the lumenal side. A helical transmembrane segment spans residues 167 to 187 (AVVDFMGIACGHIYFFLEDVF). Residues 188–237 (PFQEHGKRFLKTPQWLVYLFDERRPEPLPEDERPGGFEWGDEQPEQEQHD) are Cytoplasmic-facing. Positions 212–222 (PEPLPEDERPG) are enriched in basic and acidic residues. The disordered stretch occupies residues 212–237 (PEPLPEDERPGGFEWGDEQPEQEQHD). The span at 226–237 (WGDEQPEQEQHD) shows a compositional bias: acidic residues.

The protein belongs to the derlin family.

The protein resides in the endoplasmic reticulum membrane. May be required for the degradation process of some specific misfolded endoplasmic reticulum (ER) luminal proteins. Participates in the transfer of misfolded proteins from the ER to the cytosol, where they are destroyed by the proteasome in a ubiquitin-dependent manner. Its precise function remains unclear, but its ability to complement der1 mutations in C.cerevisiae, suggests a similar function in the degradation of ER misfolded proteins. This chain is Derlin-2, found in Caenorhabditis elegans.